Here is a 162-residue protein sequence, read N- to C-terminus: Probable chorismate pyruvate-lyase (162 aa).

Substrate is bound by residues Arg-54, Leu-92, and Glu-149.

The protein belongs to the UbiC family.

The protein resides in the cytoplasm. It carries out the reaction chorismate = 4-hydroxybenzoate + pyruvate. It functions in the pathway cofactor biosynthesis; ubiquinone biosynthesis. Removes the pyruvyl group from chorismate, with concomitant aromatization of the ring, to provide 4-hydroxybenzoate (4HB) for the ubiquinone pathway. The protein is Probable chorismate pyruvate-lyase of Methylococcus capsulatus (strain ATCC 33009 / NCIMB 11132 / Bath).